A 328-amino-acid polypeptide reads, in one-letter code: Methionyl-tRNA formyltransferase (328 aa).

A (6S)-5,6,7,8-tetrahydrofolate-binding site is contributed by 121-124 (SLLP).

It belongs to the Fmt family.

It carries out the reaction L-methionyl-tRNA(fMet) + (6R)-10-formyltetrahydrofolate = N-formyl-L-methionyl-tRNA(fMet) + (6S)-5,6,7,8-tetrahydrofolate + H(+). In terms of biological role, attaches a formyl group to the free amino group of methionyl-tRNA(fMet). The formyl group appears to play a dual role in the initiator identity of N-formylmethionyl-tRNA by promoting its recognition by IF2 and preventing the misappropriation of this tRNA by the elongation apparatus. The polypeptide is Methionyl-tRNA formyltransferase (Burkholderia thailandensis (strain ATCC 700388 / DSM 13276 / CCUG 48851 / CIP 106301 / E264)).